A 69-amino-acid polypeptide reads, in one-letter code: Cold shock-like protein CspC (69 aa).

One can recognise a CSD domain in the interval 6–66 (GQVKWFNESK…GQKGPAAVNV (61 aa)).

It localises to the cytoplasm. In Shigella flexneri, this protein is Cold shock-like protein CspC (cspC).